Here is a 345-residue protein sequence, read N- to C-terminus: Biotin synthase (345 aa).

Residues 49-276 enclose the Radical SAM core domain; it reads NQVQMSTLLS…ASFVRLSAGR (228 aa). [4Fe-4S] cluster-binding residues include C64, C68, and C71. [2Fe-2S] cluster-binding residues include C108, C139, C199, and R271.

The protein belongs to the radical SAM superfamily. Biotin synthase family. As to quaternary structure, homodimer. Requires [4Fe-4S] cluster as cofactor. [2Fe-2S] cluster serves as cofactor.

The enzyme catalyses (4R,5S)-dethiobiotin + (sulfur carrier)-SH + 2 reduced [2Fe-2S]-[ferredoxin] + 2 S-adenosyl-L-methionine = (sulfur carrier)-H + biotin + 2 5'-deoxyadenosine + 2 L-methionine + 2 oxidized [2Fe-2S]-[ferredoxin]. Its pathway is cofactor biosynthesis; biotin biosynthesis; biotin from 7,8-diaminononanoate: step 2/2. Its function is as follows. Catalyzes the conversion of dethiobiotin (DTB) to biotin by the insertion of a sulfur atom into dethiobiotin via a radical-based mechanism. The protein is Biotin synthase of Nitrosococcus oceani (strain ATCC 19707 / BCRC 17464 / JCM 30415 / NCIMB 11848 / C-107).